The following is an 83-amino-acid chain: MKTLLLTMVVVTIVCLDLGYTLKCHNTQLPFIYKTCPEGKNLCFKATLKKFPLKFPVKRGCADNCPKNSALLKYVCCSSDKCN.

The first 21 residues, 1-21 (MKTLLLTMVVVTIVCLDLGYT), serve as a signal peptide directing secretion. 4 disulfides stabilise this stretch: Cys24–Cys43, Cys36–Cys61, Cys65–Cys76, and Cys77–Cys82.

The protein belongs to the three-finger toxin family. Short-chain subfamily. Orphan group XV sub-subfamily. In terms of tissue distribution, expressed by the venom gland.

It is found in the secreted. The protein resides in the target cell membrane. In terms of biological role, has low cytotoxic activity. This is Cytotoxin homolog 5 from Naja atra (Chinese cobra).